A 228-amino-acid chain; its full sequence is Ribulose-phosphate 3-epimerase (228 aa).

Substrate is bound at residue Ser9. Positions 34, 36, and 70 each coordinate a divalent metal cation. The Proton acceptor role is filled by Asp36. Residues His70, 146-149 (GFPG), 179-181 (DGG), and 201-202 (GS) each bind substrate. Asp179 provides a ligand contact to a divalent metal cation. The active-site Proton donor is Asp179.

Belongs to the ribulose-phosphate 3-epimerase family. A divalent metal cation serves as cofactor.

It catalyses the reaction D-ribulose 5-phosphate = D-xylulose 5-phosphate. It participates in carbohydrate degradation. In terms of biological role, catalyzes the reversible epimerization of D-ribulose 5-phosphate to D-xylulose 5-phosphate. This chain is Ribulose-phosphate 3-epimerase, found in Buchnera aphidicola subsp. Baizongia pistaciae (strain Bp).